A 525-amino-acid chain; its full sequence is GMP synthase [glutamine-hydrolyzing] (525 aa).

One can recognise a Glutamine amidotransferase type-1 domain in the interval 9-207; the sequence is RILILDFGSQ…VQDICGCEAL (199 aa). The Nucleophile role is filled by Cys86. Active-site residues include His181 and Glu183. The 193-residue stretch at 208-400 folds into the GMPS ATP-PPase domain; sequence WTPSNIVEDA…LGLPYDMVYR (193 aa). ATP is bound at residue 235–241; the sequence is SGGVDSS.

In terms of assembly, homodimer.

It carries out the reaction XMP + L-glutamine + ATP + H2O = GMP + L-glutamate + AMP + diphosphate + 2 H(+). It functions in the pathway purine metabolism; GMP biosynthesis; GMP from XMP (L-Gln route): step 1/1. Catalyzes the synthesis of GMP from XMP. The polypeptide is GMP synthase [glutamine-hydrolyzing] (Pseudomonas putida (strain W619)).